The sequence spans 471 residues: Argininosuccinate lyase (471 aa).

Belongs to the lyase 1 family. Argininosuccinate lyase subfamily.

It is found in the cytoplasm. It carries out the reaction 2-(N(omega)-L-arginino)succinate = fumarate + L-arginine. It functions in the pathway amino-acid biosynthesis; L-arginine biosynthesis; L-arginine from L-ornithine and carbamoyl phosphate: step 3/3. This Deinococcus radiodurans (strain ATCC 13939 / DSM 20539 / JCM 16871 / CCUG 27074 / LMG 4051 / NBRC 15346 / NCIMB 9279 / VKM B-1422 / R1) protein is Argininosuccinate lyase.